A 319-amino-acid polypeptide reads, in one-letter code: ATP-dependent 6-phosphofructokinase 1 (319 aa).

Glycine 11 contacts ATP. 21–25 contributes to the ADP binding site; sequence RAVTR. Residues 72–73 and 102–105 each bind ATP; these read RC and GDGS. Aspartate 103 is a Mg(2+) binding site. 125–127 is a binding site for substrate; it reads TID. Aspartate 127 functions as the Proton acceptor in the catalytic mechanism. Arginine 154 contacts ADP. Substrate-binding positions include arginine 162 and 169-171; that span reads MGR. Residues 185–187 and 213–215 each bind ADP; these read GAE and KTH. Substrate contacts are provided by residues glutamate 222, arginine 243, and 249 to 252; that span reads HIQR.

This sequence belongs to the phosphofructokinase type A (PFKA) family. ATP-dependent PFK group I subfamily. Prokaryotic clade 'B1' sub-subfamily. Homotetramer. Requires Mg(2+) as cofactor.

The protein resides in the cytoplasm. The catalysed reaction is beta-D-fructose 6-phosphate + ATP = beta-D-fructose 1,6-bisphosphate + ADP + H(+). The protein operates within carbohydrate degradation; glycolysis; D-glyceraldehyde 3-phosphate and glycerone phosphate from D-glucose: step 3/4. Allosterically activated by ADP and other diphosphonucleosides, and allosterically inhibited by phosphoenolpyruvate. Functionally, catalyzes the phosphorylation of D-fructose 6-phosphate to fructose 1,6-bisphosphate by ATP, the first committing step of glycolysis. The chain is ATP-dependent 6-phosphofructokinase 1 from Clostridium perfringens (strain 13 / Type A).